The sequence spans 1529 residues: Myosin-11 (1529 aa).

One can recognise a Myosin N-terminal SH3-like domain in the interval 11–60; sequence IVGSHVWIEDSDVAWIDGLVEKINGQDVEVQATNGKKITAKLSKIYPKDM. Residues 65–735 form the Myosin motor domain; the sequence is GGVDDMTKLS…QMAELDARRT (671 aa). Residues 159–166 and 212–220 each bind ATP; these read GESGAGKT and NNNSSRFGK. 4 actin-binding regions span residues 498 to 532, 534 to 557, 592 to 616, and 616 to 638; these read LIEK…YQTF, THKR…AGEV, FPPL…KLQL, and LQQL…KPNN. IQ domains lie at 738–767, 761–790, 786–815, 809–838, 834–863, and 857–886; these read LSAA…ATIS, LRKA…QAAA, RQAA…AALV, LHVA…TKAA, QTKA…GVIL, and LKKG…ASRE. Residues 887-1059 adopt a coiled-coil conformation; sequence TGALKEAKDM…VLRQQAVSIA (173 aa). Positions 993–1027 are enriched in basic and acidic residues; the sequence is EQEKQRADDATRKFDEAQESSEDRKKKLEDTEKKA. Disordered regions lie at residues 993–1031 and 1096–1115; these read EQEK…QQLQ and INRR…LNEK. The Dilute domain maps to 1163-1472; sequence DRIIQTIGQA…IANMRVLMTE (310 aa).

Belongs to the TRAFAC class myosin-kinesin ATPase superfamily. Myosin family. Plant myosin class XI subfamily. Homodimer.

Its subcellular location is the cytoplasm. In terms of biological role, myosin heavy chain that is required for the cell cycle-regulated transport of various organelles and proteins for their segregation. Functions by binding with its tail domain to receptor proteins on organelles and exerting force with its N-terminal motor domain against actin filaments, thereby transporting its cargo along polarized actin cables. Involved in trafficking of Golgi stacks, mitochondria and peroxisomes. This is Myosin-11 (XI-E) from Arabidopsis thaliana (Mouse-ear cress).